Reading from the N-terminus, the 227-residue chain is Endonuclease V (227 aa).

Residues Asp-46 and Asp-114 each contribute to the Mg(2+) site.

Belongs to the endonuclease V family. Mg(2+) serves as cofactor.

Its subcellular location is the cytoplasm. It carries out the reaction Endonucleolytic cleavage at apurinic or apyrimidinic sites to products with a 5'-phosphate.. Its function is as follows. DNA repair enzyme involved in the repair of deaminated bases. Selectively cleaves double-stranded DNA at the second phosphodiester bond 3' to a deoxyinosine leaving behind the intact lesion on the nicked DNA. This chain is Endonuclease V, found in Alkalilimnicola ehrlichii (strain ATCC BAA-1101 / DSM 17681 / MLHE-1).